The chain runs to 786 residues: Endonuclease MutS2 (786 aa).

Position 335–342 (335–342) interacts with ATP; the sequence is GPNTGGKT. A Smr domain is found at 711–786; sequence LDLRGERFEN…GLGVTVVELK (76 aa).

It belongs to the DNA mismatch repair MutS family. MutS2 subfamily. Homodimer. Binds to stalled ribosomes, contacting rRNA.

Endonuclease that is involved in the suppression of homologous recombination and thus may have a key role in the control of bacterial genetic diversity. In terms of biological role, acts as a ribosome collision sensor, splitting the ribosome into its 2 subunits. Detects stalled/collided 70S ribosomes which it binds and splits by an ATP-hydrolysis driven conformational change. Acts upstream of the ribosome quality control system (RQC), a ribosome-associated complex that mediates the extraction of incompletely synthesized nascent chains from stalled ribosomes and their subsequent degradation. Probably generates substrates for RQC. This Bacillus cereus (strain Q1) protein is Endonuclease MutS2.